Reading from the N-terminus, the 72-residue chain is MAFLKKSLFLVLFLGLVSLSICDEEKRENEDEEEQEDDEQSEEKRGMWGSLLKGVATVVKHVLPHALSSQQS.

Residues 1-22 (MAFLKKSLFLVLFLGLVSLSIC) form the signal peptide. The propeptide occupies 23–43 (DEEKRENEDEEEQEDDEQSEE). A disordered region spans residues 24–45 (EEKRENEDEEEQEDDEQSEEKR). Residues 30–41 (EDEEEQEDDEQS) are compositionally biased toward acidic residues.

It belongs to the frog skin active peptide (FSAP) family. In terms of tissue distribution, expressed by the skin glands.

Its subcellular location is the secreted. Possesses a potent antimicrobial activity against Gram-positive and Gram-negative bacteria. Probably acts by disturbing membrane functions with its amphipathic structure. The polypeptide is Dermaseptin AA-3-4 (Agalychnis annae (Blue-sided leaf frog)).